The following is a 601-amino-acid chain: ATP-dependent RNA helicase DeaD (601 aa).

Residues 6-34 (STFSFLGLNPFIIKSLSKMGYVKPSPIQA) carry the Q motif motif. Residues 37 to 208 (IPLLLEGRDV…KRFMKNPQEI (172 aa)) form the Helicase ATP-binding domain. 50–57 (AQTGSGKT) lines the ATP pocket. The short motif at 156–159 (DEAD) is the DEAD box element. Positions 231–378 (KTDALIRFLE…EVQLPKIEVL (148 aa)) constitute a Helicase C-terminal domain. Basic and acidic residues predominate over residues 564–581 (SIFNKDKNNKRRFSDNRL). Residues 564-601 (SIFNKDKNNKRRFSDNRLNKSSSIKNETKSSFFRRKSV) are disordered. Over residues 582-594 (NKSSSIKNETKSS) the composition is skewed to polar residues.

Belongs to the DEAD box helicase family. DeaD/CsdA subfamily.

It localises to the cytoplasm. The enzyme catalyses ATP + H2O = ADP + phosphate + H(+). In terms of biological role, DEAD-box RNA helicase involved in various cellular processes at low temperature, including ribosome biogenesis, mRNA degradation and translation initiation. The polypeptide is ATP-dependent RNA helicase DeaD (Buchnera aphidicola subsp. Schizaphis graminum (strain Sg)).